The sequence spans 201 residues: 3-isopropylmalate dehydratase small subunit (201 aa).

This sequence belongs to the LeuD family. LeuD type 1 subfamily. As to quaternary structure, heterodimer of LeuC and LeuD.

The enzyme catalyses (2R,3S)-3-isopropylmalate = (2S)-2-isopropylmalate. The protein operates within amino-acid biosynthesis; L-leucine biosynthesis; L-leucine from 3-methyl-2-oxobutanoate: step 2/4. In terms of biological role, catalyzes the isomerization between 2-isopropylmalate and 3-isopropylmalate, via the formation of 2-isopropylmaleate. This is 3-isopropylmalate dehydratase small subunit from Shewanella pealeana (strain ATCC 700345 / ANG-SQ1).